A 250-amino-acid polypeptide reads, in one-letter code: MKLSVLSLASLASAAALNAKVLTGKSLTRRADFCDQWGQVTTGNFILYNNLWGQGNADSGSQCTGLDSSSGNDSIAWHTSWSWSGGAGQVKSYANAAYVFTPKQLSALGSIPTSWSWKYTGSDIIANVAYDLFTSSTADGDNEYEIMIWLAALGGAGPISSTGSPVASPTVAGHSWDLYSGMNGQMQVYSFVASSQTESFSADLQEFIMYLQSNQGLPTSQYLVDVQAGTEPFSGSDATLTTSAYSVSVA.

The first 19 residues, 1–19 (MKLSVLSLASLASAAALNA), serve as a signal peptide directing secretion. A glycan (N-linked (GlcNAc...) asparagine) is linked at N72.

The protein belongs to the glycosyl hydrolase 12 (cellulase H) family.

It is found in the secreted. It catalyses the reaction xyloglucan + H2O = xyloglucan oligosaccharides.. Its function is as follows. Catalyzes endohydrolysis of 1,4-beta-D-glucosidic linkages in xyloglucan with retention of the beta-configuration of the glycosyl residues. Specific for xyloglucan and does not hydrolyze other cell wall components. The polypeptide is Probable xyloglucan-specific endo-beta-1,4-glucanase A (xgeA) (Aspergillus terreus (strain NIH 2624 / FGSC A1156)).